The chain runs to 236 residues: Rho-related GTP-binding protein RhoV (236 aa).

The segment at 1-28 (MPPRELSEAEPPPLPASTPPPRRRSAPP) is disordered. Positions 10–20 (EPPPLPASTPP) are enriched in pro residues. Ser25 bears the Phosphoserine mark. GTP contacts are provided by residues 38–45 (GDGAVGKS), 85–89 (DTAGQ), and 143–146 (TQAD). The S-palmitoyl cysteine moiety is linked to residue Cys234.

Belongs to the small GTPase superfamily. Rho family. Interacts with PAK2. Requires Mg(2+) as cofactor. As to expression, highly expressed in brain and testis and at lower levels in spleen and lung.

The protein resides in the cell membrane. Its subcellular location is the endosome membrane. In terms of biological role, plays a role in the control of the actin cytoskeleton via activation of the JNK pathway. The chain is Rho-related GTP-binding protein RhoV from Rattus norvegicus (Rat).